A 237-amino-acid polypeptide reads, in one-letter code: V-type proton ATPase subunit E3 (237 aa).

The residue at position 1 (M1) is an N-acetylmethionine. Positions 9-67 form a coiled coil; sequence QIQQMVRFIRQEAEEKANEISISSEEEFNIEKLQLVEAEKKKIRQEYEKKEKQVDVRKK.

This sequence belongs to the V-ATPase E subunit family. V-ATPase is a heteromultimeric enzyme composed of a peripheral catalytic V1 complex (components A to H) attached to an integral membrane V0 proton pore complex (components: a, c, c'', d and e).

The protein localises to the vacuole membrane. Subunit of the peripheral V1 complex of vacuolar ATPase essential for assembly or catalytic function. V-ATPase is responsible for acidifying a variety of intracellular compartments in eukaryotic cells. This chain is V-type proton ATPase subunit E3 (VHA-E3), found in Arabidopsis thaliana (Mouse-ear cress).